The sequence spans 545 residues: 2-succinyl-5-enolpyruvyl-6-hydroxy-3-cyclohexene-1-carboxylate synthase (545 aa).

The interval 184-209 (PLVPDPEPHGAPTPAGRPGGRPWTYT) is disordered. Low complexity predominate over residues 195–205 (PTPAGRPGGRP).

It belongs to the TPP enzyme family. MenD subfamily. Homodimer. Mg(2+) serves as cofactor. It depends on Mn(2+) as a cofactor. Thiamine diphosphate is required as a cofactor.

The catalysed reaction is isochorismate + 2-oxoglutarate + H(+) = 5-enolpyruvoyl-6-hydroxy-2-succinyl-cyclohex-3-ene-1-carboxylate + CO2. The protein operates within quinol/quinone metabolism; 1,4-dihydroxy-2-naphthoate biosynthesis; 1,4-dihydroxy-2-naphthoate from chorismate: step 2/7. It participates in quinol/quinone metabolism; menaquinone biosynthesis. Catalyzes the thiamine diphosphate-dependent decarboxylation of 2-oxoglutarate and the subsequent addition of the resulting succinic semialdehyde-thiamine pyrophosphate anion to isochorismate to yield 2-succinyl-5-enolpyruvyl-6-hydroxy-3-cyclohexene-1-carboxylate (SEPHCHC). This Mycobacterium avium (strain 104) protein is 2-succinyl-5-enolpyruvyl-6-hydroxy-3-cyclohexene-1-carboxylate synthase.